The primary structure comprises 607 residues: MASLPWSLTTSTAIANTTNISAFPPSPLFQRASHVPVARNRSRRFAPSKVSCNSANGDPNSDSTSDVRETSSGKLDRRNVLLGIGGLYGAAGGLGATKPLAFGAPIQAPDISKCGTATVPDGVTPTNCCPPVTTKIIDFQLPSSGSPMRTRPAAHLVSKEYLAKYKKAIELQKALPDDDPRSFKQQANVHCTYCQGAYDQVGYTDLELQVHASWLFLPFHRYYLYFNERILAKLIDDPTFALPYWAWDNPDGMYMPTIYASSPSSLYDEKRNAKHLPPTVIDLDYDGTEPTIPDDELKTDNLAIMYKQIVSGATTPKLFLGYPYRAGDAIDPGAGTLEHAPHNIVHKWTGLADKPSEDMGNFYTAGRDPIFFGHHANVDRMWNIWKTIGGKNRKDFTDTDWLDATFVFYDENKQLVKVKVSDCVDTSKLRYQYQDIPIPWLPKNTKAKAKTTTKSSKSGVAKAAELPKTTISSIGDFPKALNSVIRVEVPRPKKSRSKKEKEDEEEVLLIKGIELDRENFVKFDVYINDEDYSVSRPKNSEFAGSFVNVPHKHMKEMKTKTNLRFAINELLEDLGAEDDESVIVTIVPRAGGDDVTIGGIEIEFVSD.

Residues 1 to 103 constitute a chloroplast transit peptide; it reads MASLPWSLTT…LGATKPLAFG (103 aa). Positions 39–73 are disordered; sequence RNRSRRFAPSKVSCNSANGDPNSDSTSDVRETSSG. The span at 50-64 shows a compositional bias: polar residues; that stretch reads VSCNSANGDPNSDST. 2 cysteine pairs are disulfide-bonded: cysteine 114-cysteine 129 and cysteine 128-cysteine 191. The Cu cation site is built by histidine 190, histidine 211, histidine 220, histidine 342, histidine 346, and histidine 375. Residues 194–211 constitute a cross-link (2'-(S-cysteinyl)-histidine (Cys-His)); the sequence is CQGAYDQVGYTDLELQVH.

It belongs to the tyrosinase family. Requires Cu(2+) as cofactor.

It is found in the plastid. The protein resides in the chloroplast thylakoid lumen. It carries out the reaction 2 catechol + O2 = 2 1,2-benzoquinone + 2 H2O. In terms of biological role, catalyzes the oxidation of mono- and o-diphenols to o-diquinones. In Vitis vinifera (Grape), this protein is Polyphenol oxidase, chloroplastic.